Consider the following 105-residue polypeptide: Flagellar transcriptional regulator FlhD (105 aa).

This sequence belongs to the FlhD family. As to quaternary structure, homodimer; disulfide-linked. Forms a heterohexamer composed of two FlhC and four FlhD subunits. Each FlhC binds a FlhD dimer, forming a heterotrimer, and a hexamer assembles by dimerization of two heterotrimers.

It is found in the cytoplasm. Its function is as follows. Functions in complex with FlhC as a master transcriptional regulator that regulates transcription of several flagellar and non-flagellar operons by binding to their promoter region. Activates expression of class 2 flagellar genes, including fliA, which is a flagellum-specific sigma factor that turns on the class 3 genes. Also regulates genes whose products function in a variety of physiological pathways. In Nitrosomonas eutropha (strain DSM 101675 / C91 / Nm57), this protein is Flagellar transcriptional regulator FlhD.